Consider the following 461-residue polypeptide: MNKYVVILAAGKGTRMKSKLYKVLHKVCGKTMVEHVVEAAKGTNPDKIITVVGNGAESVKDVLAGQSEFAFQEKQLGTGDAVLAANDLLENLEGSTLVATGDTPLFTAETFNNLFKKHEESGNSATVLTAKAPNPFGYGRIIRDEDGNVLRIVEQKDGTPEELAVDEINTGVFCFDNKELFKALKQVGNDNAQGEYYLTDVLEIMRKAGHKVGAYEMPDFSESLGVNDRIALAQATKIMQRRINEEHMRNGVSFIDPDTAYIDSDVKIGNDTVIEGNVVIKGKTEIGSNCYITNSSRIIDSKIGNNVTITSSTLQEAQMDDNTDIGPNSHLRPKAVIRKGAHIGNFVEIKKAEIGENTKVGHLTYVGDATLGKDINIGCGTIFSNYDGVKKFHTNVGDHSFIGAGATIIAPVNIADHAFVAADSTITKDVEKYDMAIARGRQTNKPDYWHKLPLAKDKEWE.

The pyrophosphorylase stretch occupies residues 1-229; sequence MNKYVVILAA…FSESLGVNDR (229 aa). UDP-N-acetyl-alpha-D-glucosamine-binding positions include 8–11, K22, Q72, and 77–78; these read LAAG and GT. A Mg(2+)-binding site is contributed by D102. UDP-N-acetyl-alpha-D-glucosamine is bound by residues G139, E154, N169, and N227. N227 provides a ligand contact to Mg(2+). The linker stretch occupies residues 230–250; the sequence is IALAQATKIMQRRINEEHMRN. The segment at 251-461 is N-acetyltransferase; that stretch reads GVSFIDPDTA…LPLAKDKEWE (211 aa). UDP-N-acetyl-alpha-D-glucosamine-binding residues include R332 and K350. The active-site Proton acceptor is H362. UDP-N-acetyl-alpha-D-glucosamine is bound by residues Y365 and N376. Residues 385–386, A422, and R439 each bind acetyl-CoA; that span reads NY.

The protein in the N-terminal section; belongs to the N-acetylglucosamine-1-phosphate uridyltransferase family. It in the C-terminal section; belongs to the transferase hexapeptide repeat family. As to quaternary structure, homotrimer. Requires Mg(2+) as cofactor.

The protein localises to the cytoplasm. The enzyme catalyses alpha-D-glucosamine 1-phosphate + acetyl-CoA = N-acetyl-alpha-D-glucosamine 1-phosphate + CoA + H(+). The catalysed reaction is N-acetyl-alpha-D-glucosamine 1-phosphate + UTP + H(+) = UDP-N-acetyl-alpha-D-glucosamine + diphosphate. It functions in the pathway nucleotide-sugar biosynthesis; UDP-N-acetyl-alpha-D-glucosamine biosynthesis; N-acetyl-alpha-D-glucosamine 1-phosphate from alpha-D-glucosamine 6-phosphate (route II): step 2/2. Its pathway is nucleotide-sugar biosynthesis; UDP-N-acetyl-alpha-D-glucosamine biosynthesis; UDP-N-acetyl-alpha-D-glucosamine from N-acetyl-alpha-D-glucosamine 1-phosphate: step 1/1. It participates in bacterial outer membrane biogenesis; LPS lipid A biosynthesis. Its function is as follows. Catalyzes the last two sequential reactions in the de novo biosynthetic pathway for UDP-N-acetylglucosamine (UDP-GlcNAc). The C-terminal domain catalyzes the transfer of acetyl group from acetyl coenzyme A to glucosamine-1-phosphate (GlcN-1-P) to produce N-acetylglucosamine-1-phosphate (GlcNAc-1-P), which is converted into UDP-GlcNAc by the transfer of uridine 5-monophosphate (from uridine 5-triphosphate), a reaction catalyzed by the N-terminal domain. The protein is Bifunctional protein GlmU of Lactobacillus johnsonii (strain CNCM I-12250 / La1 / NCC 533).